The chain runs to 376 residues: Lipid-A-disaccharide synthase (376 aa).

This sequence belongs to the LpxB family.

The enzyme catalyses a lipid X + a UDP-2-N,3-O-bis[(3R)-3-hydroxyacyl]-alpha-D-glucosamine = a lipid A disaccharide + UDP + H(+). It functions in the pathway bacterial outer membrane biogenesis; LPS lipid A biosynthesis. Functionally, condensation of UDP-2,3-diacylglucosamine and 2,3-diacylglucosamine-1-phosphate to form lipid A disaccharide, a precursor of lipid A, a phosphorylated glycolipid that anchors the lipopolysaccharide to the outer membrane of the cell. In Hydrogenovibrio crunogenus (strain DSM 25203 / XCL-2) (Thiomicrospira crunogena), this protein is Lipid-A-disaccharide synthase.